We begin with the raw amino-acid sequence, 272 residues long: Type III pantothenate kinase (272 aa).

6-13 lines the ATP pocket; sequence DVRNTHTV. 109–112 serves as a coordination point for substrate; the sequence is GADR. D111 serves as the catalytic Proton acceptor. A K(+)-binding site is contributed by D131. Residue S134 coordinates ATP. Residue T186 coordinates substrate.

Belongs to the type III pantothenate kinase family. Homodimer. Requires NH4(+) as cofactor. The cofactor is K(+).

The protein localises to the cytoplasm. The catalysed reaction is (R)-pantothenate + ATP = (R)-4'-phosphopantothenate + ADP + H(+). It participates in cofactor biosynthesis; coenzyme A biosynthesis; CoA from (R)-pantothenate: step 1/5. Catalyzes the phosphorylation of pantothenate (Pan), the first step in CoA biosynthesis. In Mycobacterium ulcerans (strain Agy99), this protein is Type III pantothenate kinase.